A 297-amino-acid polypeptide reads, in one-letter code: Formylmethanofuran--tetrahydromethanopterin formyltransferase (297 aa).

The protein belongs to the FTR family. As to quaternary structure, homotetramer.

Its subcellular location is the cytoplasm. It carries out the reaction N-formylmethanofuran + 5,6,7,8-tetrahydromethanopterin + H(+) = N(5)-formyl-5,6,7,8-tetrahydromethanopterin + methanofuran. The protein operates within one-carbon metabolism; methanogenesis from CO(2); 5,10-methenyl-5,6,7,8-tetrahydromethanopterin from CO(2): step 2/3. Its function is as follows. Catalyzes the reversible transfer of a formyl group from formylmethanofuran (formyl-MFR) to tetrahydromethanopterin (H(4)MPT) to produce 5-formyl tetrahydromethanopterin (5-formyl-H(4)MPT) and methanofuran (MFR). In Methanosarcina acetivorans (strain ATCC 35395 / DSM 2834 / JCM 12185 / C2A), this protein is Formylmethanofuran--tetrahydromethanopterin formyltransferase.